The chain runs to 90 residues: Probable Fe(2+)-trafficking protein (90 aa).

The protein belongs to the Fe(2+)-trafficking protein family.

Could be a mediator in iron transactions between iron acquisition and iron-requiring processes, such as synthesis and/or repair of Fe-S clusters in biosynthetic enzymes. This Pseudomonas putida (strain ATCC 700007 / DSM 6899 / JCM 31910 / BCRC 17059 / LMG 24140 / F1) protein is Probable Fe(2+)-trafficking protein.